A 689-amino-acid chain; its full sequence is Transcription factor BHLH42 (689 aa).

Disordered stretches follow at residues 192–287 (IDHH…NPRV) and 458–489 (DDNN…ANHV). Residues 206-217 (EHSTSNLATSSV) are compositionally biased toward polar residues. The segment covering 246–271 (EEQEQEQEEDEDDDDDDDDEEEAESD) has biased composition (acidic residues). Positions 483-496 (ELSANHVLAERRRR) are basic motif. Positions 483-532 (ELSANHVLAERRRREKLNERFIILRSLVPFVTKMDKASILGDTIEYVKQL) constitute a bHLH domain. The interval 497–532 (EKLNERFIILRSLVPFVTKMDKASILGDTIEYVKQL) is helix-loop-helix motif. Positions 547–570 (EIDQRSRSSGDPQRSGAKAATDKR) are disordered.

Belongs to the bHLH protein family. In terms of assembly, interacts with MYB123. As to expression, expressed in the inner pericarp of maturing fruits.

Its subcellular location is the nucleus. Functionally, transcription activator involved in the spatiotemporal regulation of anthocyanin biosynthesis specifically in the inner pericarp of red-fleshed kiwifruits. Functions in association with MYB123 to activate the promoters of LDOX (ANS) and F3GT1 that encode the dedicated enzymes for anthocyanin biosynthesis. This Actinidia chinensis var. chinensis (Chinese soft-hair kiwi) protein is Transcription factor BHLH42.